The chain runs to 584 residues: Negative regulator of RAS-cAMP pathway (584 aa).

At Thr-25 the chain carries Phosphothreonine. Disordered stretches follow at residues 95 to 167 (PIKP…STTS), 209 to 279 (PLQS…SKTS), 291 to 320 (SEDE…DDYN), 343 to 366 (NLDS…HDPV), and 381 to 432 (SNSN…SLKT). Composition is skewed to polar residues over residues 114 to 127 (PPTT…TRPM), 229 to 254 (CIDN…SFPQ), and 267 to 278 (NDQNGQLSLSKT). A phosphoserine mark is found at Ser-247 and Ser-276. A compositionally biased stretch (acidic residues) spans 307-320 (FYADEDDEEYDDYN). A compositionally biased stretch (polar residues) spans 343 to 363 (NLDSTKSSVSSANTINSNTSH). Residues 381–392 (SNSNNHNTAHSE) show a composition bias toward low complexity. Positions 398-432 (VSPTPQSSHSNIGPQPQQNPPSANGIKQQKPSLKT) are enriched in polar residues. A Phosphoserine modification is found at Ser-442. A Phosphoserine; by PKA modification is found at Ser-518. Residues 551 to 584 (DNTSIANSNGNGNDDTSNQRTEALGRKTSNGGRI) form a disordered region. Low complexity predominate over residues 557–568 (NSNGNGNDDTSN).

It is found in the nucleus. Negative regulator of Ras-cAMP pathway. Involved in transcriptional regulation of galactose-inducible genes. This chain is Negative regulator of RAS-cAMP pathway (MKS1), found in Saccharomyces cerevisiae (strain ATCC 204508 / S288c) (Baker's yeast).